A 354-amino-acid polypeptide reads, in one-letter code: Tsukushi (354 aa).

The first 17 residues, 1–17 (MLCSLFLLLLAVGRVQT), serve as a signal peptide directing secretion. One can recognise an LRRNT domain in the interval 18–59 (TRPCFPGCQCEEETFGLFDSFSLIRVDCSSLGPHIVPVPIPL). LRR repeat units lie at residues 60–81 (DTAH…VLAG), 86–107 (TLAG…AFSR), 110–131 (YLES…IFTS), 133–154 (PLSD…AFTT), 160–180 (ALHV…PARA), 186–207 (TIQS…RDLP), 208–228 (LRYL…AFMG), 231–253 (GLTH…GFRE), 256–277 (GLQV…EVFS), and 281–302 (LLQE…LLHH). An N-linked (GlcNAc...) asparagine glycan is attached at N75. Residue N138 is glycosylated (N-linked (GlcNAc...) asparagine). Residue N191 is glycosylated (N-linked (GlcNAc...) asparagine).

In terms of assembly, interacts with FZD4 (via FZ domain); competes with WNT2B for binding to FZD4, inhibiting Wnt signaling and repressing peripheral eye development. Interacts with TGFB1; the interaction contributes to regulation of the hair cycle. Interacts with netrin. Interacts with CCN2. In terms of tissue distribution, expressed in macrophages in inflamed wounds with wound expression starting 2 days post-wounding (dpw) (at protein level). At 7 dpw, expressed from epidermis and extracellular matrix in the wound edge to neoepidermis and granulation tissue and in panniculus carnosus under the granulation tissue (at protein level). After fibrosis, disappears in the dermal area at 11 dpw (at protein level). Expressed in the hair follicle during morphogenesis and the hair cycle (at protein level). In embryonic brain, strong expression in the olfactory bulb, anterior olfactory nucleus, neocortex, piriform cortex, glial wedge, midline zipper glia, indusium griseum and the area surrounding the anterior commissure (AC) but not on AC axons (at protein level). In the adult eye, expressed in retinal layers, lens epithelium, and ciliary body where it is expressed predominantly in the inner non-pigmented layer. Expressed in almost all brain regions in the embryo, in the cortex and the lateral ventricle at P0 and is restricted to the subventricular zone and lateral nucleus of the amygdala in adults. Prominent expression in hippocampal regions from early postnatal stages until postnatal day 15 and gradually declines at later stages. Expressed in almost all bone regions in the femurs of juveniles. In the inner ear, accumulates in nonprosensory regions during early embryonic stages and in both nonprosensory and prosensory regions in late embryonic stages. In the adult ear, expressed in the organ of Corti, spiral ganglion cells, and the stria vascularis. Highly expressed in the liver where it is detected primarily in hepatocytes but not in non-parenchymal cells.

The protein localises to the secreted. In terms of biological role, contributes to various developmental events and other processes such as wound healing and cholesterol homeostasis through its interactions with multiple signaling pathways. Wnt signaling inhibitor which competes with WNT2B for binding to Wnt receptor FZD4 and represses WNT2B-dependent development of the peripheral eye. Plays a role in regulating the hair cycle by controlling TGFB1 signaling. Required for the development of the anterior commissure in the brain by inhibiting neurite outgrowth. Essential for terminal differentiation of hippocampal neural stem cells. Plays a role in regulating bone elongation and bone mass by modulating growth plate chondrocyte function and overall body size. Required for development of the inner ear through its involvement in stereocilia formation in inner hair cells. Facilitates wound healing by inhibiting secretion of TGFB1 from macrophages which prevents myofibroblast differentiation, maintaining inflammatory cell quiescence. Plays a role in cholesterol homeostasis by reducing circulating high-density lipoprotein cholesterol, lowering cholesterol efflux capacity and decreasing cholesterol-to-bile acid conversion in the liver. In one study, shown to negatively regulate sympathetic innervation in brown fat, leading to reduced energy expenditure. In another study, shown not to affect brown fat thermogenic capacity, body weight gain or glucose homeostasis. This is Tsukushi from Mus musculus (Mouse).